The primary structure comprises 447 residues: Phosphoglucosamine mutase (447 aa).

The Phosphoserine intermediate role is filled by Ser-100. Ser-100, Asp-239, Asp-241, and Asp-243 together coordinate Mg(2+). The residue at position 100 (Ser-100) is a Phosphoserine.

This sequence belongs to the phosphohexose mutase family. Mg(2+) serves as cofactor. Activated by phosphorylation.

The catalysed reaction is alpha-D-glucosamine 1-phosphate = D-glucosamine 6-phosphate. Functionally, catalyzes the conversion of glucosamine-6-phosphate to glucosamine-1-phosphate. This Caldanaerobacter subterraneus subsp. tengcongensis (strain DSM 15242 / JCM 11007 / NBRC 100824 / MB4) (Thermoanaerobacter tengcongensis) protein is Phosphoglucosamine mutase.